Consider the following 1037-residue polypeptide: MANYFIDRPVFAWVLAIIMMLAGGLAIMNLPVAQYPQIAPPTITVSATYPGADAQTVEDSVTQVIEQNMNGLDGLMYMSSTSDAAGNASITLTFETGTSPDIAQVQVQNKLQLAMPSLPEAVQQQGISVDKSSSNILMVAAFISDNGSLNQYDIADYVASNIKDPLSRTAGVGSVQLFGSEYAMRIWLDPQKLNKYNLVPSDVISQIKVQNNQISGGQLGGMPQAADQQLNASIIVQTRLQTPEEFGKILLKVQQDGSQVLLRDVARVELGAEDYSTVARYNGKPAAGIAIKLATGANALDTSRAVKEELNRLSAYFPASLKTVYPYDTTPFIEISIQEVFKTLVEAIILVFLVMYLFLQNFRATIIPTIAVPVVILGTFAILSAVGFTINTLTMFGMVLAIGLLVDDAIVVVENVERVIAEDKLPPKEATHKSMGQIQRALVGIAVVLSAVFMPMAFMSGATGEIYRQFSITLISSMLLSVFVAMSLTPALCATILKAAPEGGHKPNALFARFNTLFEKSTQHYTDSTRSLLRCTGRYMVIYLLICAGMAVLFLRTPTSFLPEEDQGVFMTTAQLPSGATMVNTTKVLQQVTDYYLTKEKDNVQSVFTVGGFGFSGQGQNNGLAFISLKPWSERVGEENSVTAIIQRAMIALSSINKAVVFPFNLPAVAELGTASGFDMELLDNGNLGHEKLTQARNELLSLAAQSPNQVTGVRPNGLEDTPMFKVNVNAAKAEAMGVALSDINQTISTAFGSSYVNDFLNQGRVKKVYVQAGTPFRMLPDNINQWYVRNASGTMAPLSAYSSTEWTYGSPRLERYNGIPSMEILGEAAAGKSTGDAMKFMADLVAKLPAGVGYSWTGLSYQEALSSNQAPALYAISLVVVFLALAALYESWSIPFSVMLVVPLGVVGALLATDLRGLSNDVYFQVGLLTTIGLSAKNAILIVEFAVEMMQKEGKTPIEAIIEAARMRLRPILMTSLAFILGVLPLVISHGAGSGAQNAVGTGVMGGMFAATVLAIYFVPVFFVVVEHLFARFKKA.

Residues 1 to 9 (MANYFIDRP) lie on the Cytoplasmic side of the membrane. The chain crosses the membrane as a helical span at residues 10-30 (VFAWVLAIIMMLAGGLAIMNL). The Periplasmic portion of the chain corresponds to 31–338 (PVAQYPQIAP…TTPFIEISIQ (308 aa)). Residues 339 to 359 (EVFKTLVEAIILVFLVMYLFL) form a helical membrane-spanning segment. Residues 360 to 369 (QNFRATIIPT) lie on the Cytoplasmic side of the membrane. The chain crosses the membrane as a helical span at residues 370–390 (IAVPVVILGTFAILSAVGFTI). Residues 391 to 392 (NT) are Periplasmic-facing. The helical transmembrane segment at 393 to 413 (LTMFGMVLAIGLLVDDAIVVV) threads the bilayer. Residues 414-441 (ENVERVIAEDKLPPKEATHKSMGQIQRA) lie on the Cytoplasmic side of the membrane. The helical transmembrane segment at 442 to 462 (LVGIAVVLSAVFMPMAFMSGA) threads the bilayer. The Periplasmic portion of the chain corresponds to 463–471 (TGEIYRQFS). Residues 472 to 492 (ITLISSMLLSVFVAMSLTPAL) form a helical membrane-spanning segment. Residues 493–534 (CATILKAAPEGGHKPNALFARFNTLFEKSTQHYTDSTRSLLR) are Cytoplasmic-facing. Residues 535 to 555 (CTGRYMVIYLLICAGMAVLFL) form a helical membrane-spanning segment. Over 556–870 (RTPTSFLPEE…SYQEALSSNQ (315 aa)) the chain is Periplasmic. A helical transmembrane segment spans residues 871 to 891 (APALYAISLVVVFLALAALYE). Position 892 (Ser-892) is a topological domain, cytoplasmic. Residues 893 to 913 (WSIPFSVMLVVPLGVVGALLA) form a helical membrane-spanning segment. Residues 914 to 927 (TDLRGLSNDVYFQV) are Periplasmic-facing. The chain crosses the membrane as a helical span at residues 928–948 (GLLTTIGLSAKNAILIVEFAV). Residues 949–972 (EMMQKEGKTPIEAIIEAARMRLRP) are Cytoplasmic-facing. Residues 973–993 (ILMTSLAFILGVLPLVISHGA) form a helical membrane-spanning segment. Topologically, residues 994–1006 (GSGAQNAVGTGVM) are periplasmic. Residues 1007–1027 (GGMFAATVLAIYFVPVFFVVV) form a helical membrane-spanning segment. The Cytoplasmic segment spans residues 1028–1037 (EHLFARFKKA).

This sequence belongs to the resistance-nodulation-cell division (RND) (TC 2.A.6) family. Homotrimer. Part of the tripartite efflux system MdtEF-TolC, which is composed of an inner membrane transporter, MdtF, a membrane fusion protein, MdtE, and an outer membrane component, TolC. The complex forms a large protein conduit and can translocate molecules across both the inner and outer membranes.

The protein resides in the cell inner membrane. Its function is as follows. Part of the tripartite efflux system MdtEF-TolC, which confers resistance to various compounds. This Escherichia coli O157:H7 protein is Multidrug resistance protein MdtF (mdtF).